We begin with the raw amino-acid sequence, 198 residues long: MDTARTATIHRVTSETDITIRLDLDGTGQSRIATGIGFFDHMLTALARHGMFDLDIEAKGDLHIDFHHTVEDTGIALGQAFVRAIGDKRGIRRFGHALVPLDEALSEVVADISGRPYLAWAVDFTRDKIGEMDTELFEEFFRAFAMSALVTLHVTQKAGRNCHHIAEASFKAAARALRMATEADPRAAGAIPSTKGVL.

It belongs to the imidazoleglycerol-phosphate dehydratase family.

It localises to the cytoplasm. It carries out the reaction D-erythro-1-(imidazol-4-yl)glycerol 3-phosphate = 3-(imidazol-4-yl)-2-oxopropyl phosphate + H2O. The protein operates within amino-acid biosynthesis; L-histidine biosynthesis; L-histidine from 5-phospho-alpha-D-ribose 1-diphosphate: step 6/9. The sequence is that of Imidazoleglycerol-phosphate dehydratase from Gluconacetobacter diazotrophicus (strain ATCC 49037 / DSM 5601 / CCUG 37298 / CIP 103539 / LMG 7603 / PAl5).